We begin with the raw amino-acid sequence, 318 residues long: Ficolin-1-B (318 aa).

The signal sequence occupies residues 1-19 (MTRWVQTFLLLVAVIRSYA). In terms of domain architecture, Collagen-like spans 42–99 (GCPGIPGVPGPQGPSGPAGAKGEKGFPGIPGKMGPTGLKGERGISGPKGQKGDKGDPG). The Fibrinogen C-terminal domain occupies 100–318 (IPVVGMAQNC…VSEIKFRPQP (219 aa)). Cysteines 109 and 137 form a disulfide. 2 N-linked (GlcNAc...) asparagine glycosylation sites follow: asparagine 205 and asparagine 222. Aspartate 253 serves as a coordination point for Ca(2+). N-linked (GlcNAc...) asparagine glycosylation occurs at asparagine 254. The Ca(2+) site is built by aspartate 255 and serine 257. Cysteine 261 and cysteine 274 form a disulfide bridge. 273-275 (SCH) contacts a carbohydrate. An N-linked (GlcNAc...) asparagine glycan is attached at asparagine 287.

This sequence belongs to the ficolin lectin family. In terms of assembly, homotrimer. May form higher-order oligomers. Post-translationally, N-glycosylated. In terms of tissue distribution, expressed in peripheral blood leukocytes. Also detected at lower levels in spleen and lung.

The protein resides in the secreted. Functionally, may function in innate immunity through activation of the lectin complement pathway. Binds to GalNAc and GlcNAc carbohydrate moieties. This Xenopus laevis (African clawed frog) protein is Ficolin-1-B.